The sequence spans 173 residues: VQ motif-containing protein 31 (173 aa).

Positions 27-36 match the VQ motif; sequence FREIVQRLTG. Thr-46 bears the Phosphothreonine mark. Disordered stretches follow at residues 76-105 and 143-173; these read EIVK…TSPV and LHPS…SGKP. A compositionally biased stretch (polar residues) spans 86–105; sequence PTGTTPSSKSGNTNLLTSPV. A phosphoserine mark is found at Ser-92, Ser-103, Ser-146, and Ser-149. A compositionally biased stretch (low complexity) spans 154-165; the sequence is TEPELLTLFPLT. Thr-165 carries the post-translational modification Phosphothreonine. Residues Ser-166 and Ser-170 each carry the phosphoserine modification.

Post-translationally, phosphorylated on serine and threonine residues by MPK6.

The protein resides in the nucleus. Its function is as follows. May modulate WRKY transcription factor activities. This is VQ motif-containing protein 31 from Arabidopsis thaliana (Mouse-ear cress).